A 601-amino-acid chain; its full sequence is DnaJ-like protein MG200 (601 aa).

In terms of domain architecture, J spans 5-77 (KRDYYEVLGI…DKYGFDGVDG (73 aa)). Disordered regions lie at residues 143 to 163 (VQQN…VPGE) and 205 to 272 (VDSE…EPIP). Positions 151 to 160 (KDPDELRSKV) are enriched in basic and acidic residues. Residues 263–272 (EPTPIPEPIP) show a composition bias toward pro residues.

The sequence is that of DnaJ-like protein MG200 from Mycoplasma genitalium (strain ATCC 33530 / DSM 19775 / NCTC 10195 / G37) (Mycoplasmoides genitalium).